A 356-amino-acid polypeptide reads, in one-letter code: Mitogen-activated protein kinase PMK1 (356 aa).

The 289-residue stretch at 24 to 312 folds into the Protein kinase domain; sequence YDIQDVVGEG…VEEALKHPYL (289 aa). Residues 30–38 and Lys-53 contribute to the ATP site; that span reads VGEGAYGVV.

This sequence belongs to the protein kinase superfamily. CMGC Ser/Thr protein kinase family. MAP kinase subfamily. Requires Mg(2+) as cofactor. In terms of processing, phosphorylated by MST7.

It carries out the reaction L-seryl-[protein] + ATP = O-phospho-L-seryl-[protein] + ADP + H(+). The catalysed reaction is L-threonyl-[protein] + ATP = O-phospho-L-threonyl-[protein] + ADP + H(+). Its function is as follows. Mitogen-activated protein kinase; part of the MST11-MST7-PMK1 MAP kinase (MAPK) cascade that is essential for appressorium formation, penetration and invasive growth. Central regulator of appressorium development that acts downstream of the cAMP signal. The MST11-MST7-PMK1 MAP kinase cascade transduces signals from the cell surface sensors MDB2 and SHO1 that recognize various surface signals such as surface hydrophobicity, cutin monomers, and rice leaf waxes. Regulates expression of secreted fungal effector proteins implicated of host immune defenses, preventing reactive oxygen species generation and excessive callose deposition at plasmodesmata. Furthermore, controls the hyphal constriction required for fungal growth from one rice cell to the neighboring cell, enabling host tissue colonization and blast disease. Targets downstream of the PMK1-MAPK pathway include transcription factor MST12 and pathogenicity-related genes GAS1 and GAS2, both of which are expressed during appressorium formation, even if regulation of MST12 is not associated with expression of GAS1 or GAS2. The sequence is that of Mitogen-activated protein kinase PMK1 from Pyricularia oryzae (Rice blast fungus).